Reading from the N-terminus, the 221-residue chain is Molybdenum cofactor guanylyltransferase (221 aa).

Residues 18–20, Lys-35, Asn-63, Asp-81, and Asp-112 each bind GTP; that span reads IAG. Asp-112 contributes to the Mg(2+) binding site.

It belongs to the MobA family. In terms of assembly, monomer. Requires Mg(2+) as cofactor.

Its subcellular location is the cytoplasm. It carries out the reaction Mo-molybdopterin + GTP + H(+) = Mo-molybdopterin guanine dinucleotide + diphosphate. In terms of biological role, transfers a GMP moiety from GTP to Mo-molybdopterin (Mo-MPT) cofactor (Moco or molybdenum cofactor) to form Mo-molybdopterin guanine dinucleotide (Mo-MGD) cofactor. The sequence is that of Molybdenum cofactor guanylyltransferase from Brucella abortus (strain S19).